Here is a 55-residue protein sequence, read N- to C-terminus: Large ribosomal subunit protein bL33 (55 aa).

The protein belongs to the bacterial ribosomal protein bL33 family.

The polypeptide is Large ribosomal subunit protein bL33 (Sinorhizobium medicae (strain WSM419) (Ensifer medicae)).